The chain runs to 339 residues: Dihydroorotate dehydrogenase (quinone) (339 aa).

FMN is bound by residues 64–68 and T88; that span reads AGADK. Substrate is bound at residue K68. 113 to 117 contacts substrate; it reads NRNGF. Residues N141 and N174 each contribute to the FMN site. A substrate-binding site is contributed by N174. The active-site Nucleophile is S177. N179 is a binding site for substrate. FMN contacts are provided by K219 and T247. 248–249 is a binding site for substrate; that stretch reads NT. Residues G270, G299, and 320–321 contribute to the FMN site; that span reads YS.

Belongs to the dihydroorotate dehydrogenase family. Type 2 subfamily. As to quaternary structure, monomer. It depends on FMN as a cofactor.

It localises to the cell membrane. The catalysed reaction is (S)-dihydroorotate + a quinone = orotate + a quinol. The protein operates within pyrimidine metabolism; UMP biosynthesis via de novo pathway; orotate from (S)-dihydroorotate (quinone route): step 1/1. Catalyzes the conversion of dihydroorotate to orotate with quinone as electron acceptor. This is Dihydroorotate dehydrogenase (quinone) from Haemophilus influenzae (strain PittGG).